The following is a 189-amino-acid chain: Potassium-transporting ATPase KdpC subunit (189 aa).

The helical transmembrane segment at 8-28 (LVMLILLTLITGIAYPLLTTG) threads the bilayer.

It belongs to the KdpC family. In terms of assembly, the system is composed of three essential subunits: KdpA, KdpB and KdpC.

The protein resides in the cell inner membrane. Part of the high-affinity ATP-driven potassium transport (or Kdp) system, which catalyzes the hydrolysis of ATP coupled with the electrogenic transport of potassium into the cytoplasm. This subunit acts as a catalytic chaperone that increases the ATP-binding affinity of the ATP-hydrolyzing subunit KdpB by the formation of a transient KdpB/KdpC/ATP ternary complex. This chain is Potassium-transporting ATPase KdpC subunit, found in Serratia proteamaculans (strain 568).